A 146-amino-acid polypeptide reads, in one-letter code: Anti-sigma F factor (146 aa).

It belongs to the anti-sigma-factor family.

It carries out the reaction L-seryl-[protein] + ATP = O-phospho-L-seryl-[protein] + ADP + H(+). The enzyme catalyses L-threonyl-[protein] + ATP = O-phospho-L-threonyl-[protein] + ADP + H(+). Functionally, binds to sigma F and blocks its ability to form an RNA polymerase holoenzyme (E-sigma F). Phosphorylates SpoIIAA on a serine residue. This phosphorylation may enable SpoIIAA to act as an anti-anti-sigma factor that counteracts SpoIIAB and thus releases sigma F from inhibition. The polypeptide is Anti-sigma F factor (Bacillus cereus (strain ATCC 14579 / DSM 31 / CCUG 7414 / JCM 2152 / NBRC 15305 / NCIMB 9373 / NCTC 2599 / NRRL B-3711)).